The primary structure comprises 437 residues: Dolichyl-diphosphooligosaccharide--protein glycosyltransferase 48 kDa subunit (437 aa).

A signal peptide spans 1–24; that stretch reads MASLRVSVLLVAASCLLLGSGLRA. Over 25–407 the chain is Lumenal; it reads GPRTLVLLEN…QYERFIPSAY (383 aa). The chain crosses the membrane as a helical span at residues 408–428; the sequence is PYYASAFSVMFGLFIFSIVFL. Over 429–437 the chain is Cytoplasmic; that stretch reads HMKEKEKSD.

It belongs to the DDOST 48 kDa subunit family. As to quaternary structure, component of the oligosaccharyltransferase (OST) complex.

It localises to the endoplasmic reticulum membrane. It functions in the pathway protein modification; protein glycosylation. In terms of biological role, subunit of the oligosaccharyl transferase (OST) complex that catalyzes the initial transfer of a defined glycan (Glc(3)Man(9)GlcNAc(2) in eukaryotes) from the lipid carrier dolichol-pyrophosphate to an asparagine residue within an Asn-X-Ser/Thr consensus motif in nascent polypeptide chains, the first step in protein N-glycosylation. N-glycosylation occurs cotranslationally and the complex associates with the Sec61 complex at the channel-forming translocon complex that mediates protein translocation across the endoplasmic reticulum (ER). All subunits are required for a maximal enzyme activity. Required for the assembly of both SST3A- and SS3B-containing OST complexes. The protein is Dolichyl-diphosphooligosaccharide--protein glycosyltransferase 48 kDa subunit of Xenopus tropicalis (Western clawed frog).